A 150-amino-acid polypeptide reads, in one-letter code: Large ribosomal subunit protein uL11 (150 aa).

Belongs to the universal ribosomal protein uL11 family. In terms of assembly, part of the ribosomal stalk of the 50S ribosomal subunit. Interacts with L10 and the large rRNA to form the base of the stalk. L10 forms an elongated spine to which L12 dimers bind in a sequential fashion forming a multimeric L10(L12)X complex. One or more lysine residues are methylated.

Its function is as follows. Forms part of the ribosomal stalk which helps the ribosome interact with GTP-bound translation factors. The chain is Large ribosomal subunit protein uL11 from Ureaplasma urealyticum serovar 10 (strain ATCC 33699 / Western).